The primary structure comprises 31 residues: uncharacterized protein (31 aa).

A helical membrane pass occupies residues Thr-7–Trp-29.

It is found in the cell inner membrane. This is an uncharacterized protein from Escherichia coli (strain K12).